We begin with the raw amino-acid sequence, 197 residues long: MAVVPIRIVGDPVLHTPTSPVPVGADGSLPADLPELIATMYETMDAAHGVGLAANQIGYGLRLFVYDCADDRRKAAHRRGVVINPVLETSEIPENMPDPDNDDEGCLSVPGESFPTGRATWARVTGLDAEGNPVELEGSGLFARMLQHETGHLDGYLYLDCLIGRHARSAKRAVKSHGWGVPGLSWLPGEGPDPFGH.

Fe cation contacts are provided by Cys106 and His148. Residue Glu149 is part of the active site. His152 contributes to the Fe cation binding site.

It belongs to the polypeptide deformylase family. The cofactor is Fe(2+).

The catalysed reaction is N-terminal N-formyl-L-methionyl-[peptide] + H2O = N-terminal L-methionyl-[peptide] + formate. In terms of biological role, removes the formyl group from the N-terminal Met of newly synthesized proteins. Requires at least a dipeptide for an efficient rate of reaction. N-terminal L-methionine is a prerequisite for activity but the enzyme has broad specificity at other positions. The protein is Peptide deformylase of Mycobacterium ulcerans (strain Agy99).